We begin with the raw amino-acid sequence, 373 residues long: MGSQVSVDTGAVHVVIVGGGFGGIAAASQLQALNVPFMLVDMKDSFHHNVAALRASVESGFAKKTFISYSATFKDNFRQGKVIGIDLKNRMVLLQGGEALPFSHLILATGSTGPFPGKFNEVSCQQAAIQAYEDMVKQIQRSQFIVVVGGGSAGVEMAAEIKTEYPEKEVTLIHSRVPLADKELLPCVRQEVKEILLRKGVQLLLSERVSNLEELPRNEYREYIKVETDKGTEVATNMVIVCNGIKINSSAYRSAFESRLASNGALKVNEFLQVEGYSNIYAIGDCADTKEPKMAYHAGLHANVAVANIVNSMKQRPLKAYKPGALTFLLSMGRNDGVGQISGFYVGRLMVRLAKSRDLLISTSWKTMRQSPP.

Residue Gly-2 is the site of N-myristoyl glycine attachment. A helical transmembrane segment spans residues 7-27 (VDTGAVHVVIVGGGFGGIAAA). 6-hydroxy-FAD is bound by residues 18–22 (GGGFG), Arg-54, and Val-82. N6-acetyllysine is present on Lys-168. Asp-285 is a 6-hydroxy-FAD binding site.

Belongs to the FAD-dependent oxidoreductase family. In terms of assembly, interacts with importin subunits KPNA2 and IPO5; this interaction likely mediates the translocation into the nucleus upon oxidative stress. It depends on 6-hydroxy-FAD as a cofactor. N-myristoylation at Gly-2 mediates the recruitment to lipid droplets and plasma membrane. In terms of processing, acetylation at Lys-168 prevents AIFM2 ubiquitination and degradation, thereby inhibiting ferroptosis. KAT2B mediates acetylation at Lys-168, while HDAC3 removes it. Post-translationally, ubiquitinated. AIFM2 undergoes 'Lys-29'-ubiquitination and proteasomal degradation, which is inhibited by acetylation at Lys-168. In terms of tissue distribution, detected in most normal tissues as two transcripts of 1.8 and 4.0 kb in length, respectively. Highly expressed in liver, testis, and kidney, and expressed at lower levels in pancreas, spleen, brain and lung. Expressed in heart (at protein level).

It is found in the lipid droplet. It localises to the cell membrane. The protein localises to the cytoplasm. The protein resides in the mitochondrion membrane. Its subcellular location is the nucleus. It carries out the reaction ubiquinone-10 + NADH + H(+) = ubiquinol-10 + NAD(+). The catalysed reaction is phylloquinone + NADH + H(+) = phylloquinol + NAD(+). The enzyme catalyses menaquinone-4 + NADH + H(+) = menaquinol-4 + NAD(+). It catalyses the reaction menadione + NADH + H(+) = menadiol + NAD(+). Its activity is regulated as follows. The modification by 4-hydroxy-2-nonenal (HNE) adduction in mitochondria results in loss of the oxidoreductase activity and activation of a novel function in mitochondrial oxidative stress signaling. In terms of biological role, a NAD(P)H-dependent oxidoreductase that acts as a key inhibitor of ferroptosis. At the plasma membrane, catalyzes reduction of coenzyme Q/ubiquinone-10 to ubiquinol-10, a lipophilic radical-trapping antioxidant that prevents lipid oxidative damage and consequently ferroptosis. Acts in parallel to GPX4 to suppress phospholipid peroxidation and ferroptosis. This anti-ferroptotic function is independent of cellular glutathione levels. Also acts as a potent radical-trapping antioxidant by mediating warfarin-resistant vitamin K reduction in the canonical vitamin K cycle: catalyzes NAD(P)H-dependent reduction of vitamin K (phylloquinone, menaquinone-4 and menadione) to hydroquinone forms. Hydroquinones act as potent radical-trapping antioxidants inhibitor of phospholipid peroxidation and ferroptosis. May play a role in mitochondrial stress signaling. Upon oxidative stress, associates with the lipid peroxidation end product 4-hydroxy-2-nonenal (HNE) forming a lipid adduct devoid of oxidoreductase activity, which then translocates from mitochondria into the nucleus triggering DNA damage and cell death. The protein is Ferroptosis suppressor protein 1 of Mus musculus (Mouse).